We begin with the raw amino-acid sequence, 249 residues long: Sodium channel modifier 1 (249 aa).

A Bipartite nuclear localization signal motif is present at residues 4–20; it reads KREGDDQSQLNILKKRR. The segment at 42 to 74 adopts a Matrin-type zinc-finger fold; that stretch reads YSCLVCSHRPVFDTVDMLVVHRKGKRHLEGMKW. Positions 94–103 are enriched in basic and acidic residues; it reads YVKAEDDRQE. Disordered regions lie at residues 94-116, 128-199, and 228-249; these read YVKA…QTRK, YSSC…PLTE, and ENVE…SESS. The segment covering 104–115 has biased composition (polar residues); sequence PSSSAPLLTQTR. Positions 134–149 are enriched in basic and acidic residues; that stretch reads KASERSESSSKEHRND. Over residues 150–170 the composition is skewed to polar residues; that stretch reads LANSHLSMRTESNDSRTTVHQ. Positions 230-239 are enriched in acidic residues; that stretch reads VEFDSDEEEP.

As to quaternary structure, component of the minor spliceosome, which splices U12-type introns.

It is found in the nucleus. It localises to the nucleoplasm. Its subcellular location is the nucleus speckle. Its function is as follows. As a component of the minor spliceosome, involved in the splicing of U12-type introns in pre-mRNAs. The chain is Sodium channel modifier 1 (scnm1) from Danio rerio (Zebrafish).